The following is a 348-amino-acid chain: Phosphate acyltransferase (348 aa).

Belongs to the PlsX family. As to quaternary structure, homodimer. Probably interacts with PlsY.

The protein localises to the cytoplasm. It catalyses the reaction a fatty acyl-[ACP] + phosphate = an acyl phosphate + holo-[ACP]. It participates in lipid metabolism; phospholipid metabolism. In terms of biological role, catalyzes the reversible formation of acyl-phosphate (acyl-PO(4)) from acyl-[acyl-carrier-protein] (acyl-ACP). This enzyme utilizes acyl-ACP as fatty acyl donor, but not acyl-CoA. The sequence is that of Phosphate acyltransferase from Oenococcus oeni (strain ATCC BAA-331 / PSU-1).